Consider the following 415-residue polypeptide: MAVSTSHFRSLCASSRSLSRTGIVAPISCRGYATTEPSPSATSTTTTTTARRRTTFKDKLNAGPSFADFVGNDNAPLDPSEAYALKTALVGPAGRKKEMTRLPSWLKTPIPDSKNYQRLKKDLRGLNLHTVCEEARCPNISDCWGGSDKSAATATIMLMGDTCTRGCRFCSVKTSRTPSPLDPHEPENTAEAISRWGLGYVVLTSVDRDDLADGGARHFAETVMKIKQKAPSILVECLTGDYAGDLEMVKLVARSGLDVYAHNVETVEALTPQVRDRRANFQQSIRVLEAAKNAQPSLITKTSLMLGLGETDEQLWDALRQLRVVNVDVVTFGQYMRPTKRHMAVHEYVTPDRFELWRQRALDMGFLYCASGPLVRSSYKAGEAFIENVLKKRRAASGSTETVGVRPVAVDEVTR.

A mitochondrion-targeting transit peptide spans 1-32 (MAVSTSHFRSLCASSRSLSRTGIVAPISCRGY). The tract at residues 30-50 (RGYATTEPSPSATSTTTTTTA) is disordered. Over residues 33 to 49 (ATTEPSPSATSTTTTTT) the composition is skewed to low complexity. [4Fe-4S] cluster contacts are provided by Cys132, Cys137, Cys143, Cys163, Cys167, Cys170, and Ser378. The Radical SAM core domain maps to 146-367 (GSDKSAATAT…RQRALDMGFL (222 aa)).

The protein belongs to the radical SAM superfamily. Lipoyl synthase family. [4Fe-4S] cluster serves as cofactor.

The protein localises to the mitochondrion. It catalyses the reaction [[Fe-S] cluster scaffold protein carrying a second [4Fe-4S](2+) cluster] + N(6)-octanoyl-L-lysyl-[protein] + 2 oxidized [2Fe-2S]-[ferredoxin] + 2 S-adenosyl-L-methionine + 4 H(+) = [[Fe-S] cluster scaffold protein] + N(6)-[(R)-dihydrolipoyl]-L-lysyl-[protein] + 4 Fe(3+) + 2 hydrogen sulfide + 2 5'-deoxyadenosine + 2 L-methionine + 2 reduced [2Fe-2S]-[ferredoxin]. Its pathway is protein modification; protein lipoylation via endogenous pathway; protein N(6)-(lipoyl)lysine from octanoyl-[acyl-carrier-protein]: step 2/2. Functionally, catalyzes the radical-mediated insertion of two sulfur atoms into the C-6 and C-8 positions of the octanoyl moiety bound to the lipoyl domains of lipoate-dependent enzymes, thereby converting the octanoylated domains into lipoylated derivatives. In Neosartorya fischeri (strain ATCC 1020 / DSM 3700 / CBS 544.65 / FGSC A1164 / JCM 1740 / NRRL 181 / WB 181) (Aspergillus fischerianus), this protein is Lipoyl synthase, mitochondrial.